We begin with the raw amino-acid sequence, 661 residues long: Chermesin D/asnovolin J monooxidase nvfH (661 aa).

N-linked (GlcNAc...) asparagine glycosylation is present at Asn-12. Residues Val-89–Phe-111 traverse the membrane as a helical segment. Residues Thr-128–Trp-131, Asp-140–Val-141, and Tyr-146 each bind FAD. Met-138–Asp-140 contacts NADP(+). NADP(+) contacts are provided by residues Thr-286 to Gln-292 and Arg-309 to Thr-310. Residues Asn-382 and Asn-538 are each glycosylated (N-linked (GlcNAc...) asparagine).

Belongs to the FAD-binding monooxygenase family. FAD serves as cofactor.

The protein localises to the membrane. The catalysed reaction is chermesin D + AH2 + O2 = asnovolin I + A + H2O. It carries out the reaction asnovolin J + AH2 + O2 = asnovolin A + A + H2O. The protein operates within secondary metabolite biosynthesis; terpenoid biosynthesis. In terms of biological role, chermesin D/asnovolin J monooxidase; part of the gene cluster that mediates the biosynthesis of novofumigatonin, a heavily oxygenated meroterpenoid containing a unique orthoester moiety. The first step of the pathway is the synthesis of 3,5-dimethylorsellinic acid (DMOA) by the polyketide synthase nvfA via condensation of one acetyl-CoA starter unit with 3 malonyl-CoA units and 2 methylations. DMOA is then converted to farnesyl-DMOA by the farnesyltransferase nvfB. Epoxydation by FAD-dependent monooxygenase nvfK, followed by a protonation-initiated cyclization catalyzed by the terpene cyclase nvfL leads to the production of asnavolin H. The short chain dehydrogenase nvfC then as a 3-OH dehydrogenase of asnovolin H to yield chemesin D. There are two branches to synthesize asnovolin A from chemesin D. In one branch, chemesin D undergoes Baeyer-Villiger oxidation by nvfH, methylation by nvfJ, and enoyl reduction by the nvfM D enoylreductase that reduces the double bond between C-5'and C-6', to form respectively asnovolin I, asnovolin K, and asnovolin A. In the other branch, the methylation precedes the Baeyer-Villiger oxidation and the enoyl reduction to yield asnovolin A via the asnovolin J intermediate. Asnovolin A is further converted to fumigatonoid A by the Fe(II)/2-oxoglutarate-dependent dioxygenase nvfI that catalyzes an endoperoxidation reaction. The alpha/beta hydrolase nvfD then acts as an epimerase that converts fumigatonoid A to its C-5' epimer, which then undergoes spontaneous or nvfD-catalyzed lactonization. The following step utilizes the ketoreductase nvfG to produce fumigatonoid B. The dioxygenase nvfE further converts fumigatonoid B into fumigatonoid C. Finally the Fe(II)/2-oxoglutarate-dependent dioxygenase nvfF catalyzes two rounds of oxidation to transform fumigatonoid C into the end product, novofumigatonin A. The protein is Chermesin D/asnovolin J monooxidase nvfH of Aspergillus novofumigatus (strain IBT 16806).